Reading from the N-terminus, the 143-residue chain is ATP synthase F(0) complex subunit C2, mitochondrial (143 aa).

The transit peptide at 1-68 directs the protein to the mitochondrion; the sequence is MYTCAKFVST…RSFQTSAISR (68 aa). A helical transmembrane segment spans residues 84-104; that stretch reads VGVAGSGAGIGTVFGSLIIGY. N6,N6,N6-trimethyllysine is present on lysine 111. Residues 119–139 form a helical membrane-spanning segment; that stretch reads ILGFALSEAMGLFCLMVAFLI.

This sequence belongs to the ATPase C chain family. F-type ATPases have 2 components, CF(1) - the catalytic core - and CF(0) - the membrane proton channel. CF(1) has five subunits: alpha(3), beta(3), gamma(1), delta(1), epsilon(1). CF(0) has three main subunits: a, b and c. Interacts with DNAJC30; interaction is direct. Trimethylated by ATPSCKMT at Lys-111. Methylation is required for proper incorporation of the C subunit into the ATP synthase complex and mitochondrial respiration.

The protein resides in the mitochondrion membrane. Mitochondrial membrane ATP synthase (F(1)F(0) ATP synthase or Complex V) produces ATP from ADP in the presence of a proton gradient across the membrane which is generated by electron transport complexes of the respiratory chain. F-type ATPases consist of two structural domains, F(1) - containing the extramembraneous catalytic core and F(0) - containing the membrane proton channel, linked together by a central stalk and a peripheral stalk. During catalysis, ATP synthesis in the catalytic domain of F(1) is coupled via a rotary mechanism of the central stalk subunits to proton translocation. Part of the complex F(0) domain. A homomeric c-ring of probably 10 subunits is part of the complex rotary element. The chain is ATP synthase F(0) complex subunit C2, mitochondrial from Ovis aries (Sheep).